Consider the following 252-residue polypeptide: 5'-nucleotidase SurE (252 aa).

Residues Asp-8, Asp-9, Ser-39, and Asn-91 each contribute to the a divalent metal cation site.

It belongs to the SurE nucleotidase family. The cofactor is a divalent metal cation.

It localises to the cytoplasm. It carries out the reaction a ribonucleoside 5'-phosphate + H2O = a ribonucleoside + phosphate. Nucleotidase that shows phosphatase activity on nucleoside 5'-monophosphates. This Legionella pneumophila (strain Corby) protein is 5'-nucleotidase SurE.